Here is a 149-residue protein sequence, read N- to C-terminus: Large ribosomal subunit protein bL9 (149 aa).

It belongs to the bacterial ribosomal protein bL9 family.

Its function is as follows. Binds to the 23S rRNA. The protein is Large ribosomal subunit protein bL9 of Haemophilus influenzae (strain PittGG).